Here is a 182-residue protein sequence, read N- to C-terminus: Keratin, type II cytoskeletal 60 kDa, component III (182 aa).

One can recognise an IF rod domain in the interval 1 to 63 (ERGELALKDA…KLLEGEECRL (63 aa)). The segment at 1-63 (ERGELALKDA…KLLEGEECRL (63 aa)) is coil 2. Positions 63 to 182 (LSGEGVGPVN…TSSSRKSFKS (120 aa)) are tail. Residues 157 to 182 (FGSGGGSSSSVKFVSTTSSSRKSFKS) are disordered. Residues 164–182 (SSSVKFVSTTSSSRKSFKS) are compositionally biased toward low complexity.

This sequence belongs to the intermediate filament family. Heterotetramer of two type I and two type II keratins.

The chain is Keratin, type II cytoskeletal 60 kDa, component III from Bos taurus (Bovine).